The primary structure comprises 582 residues: DNA primase (582 aa).

The CHC2-type zinc finger occupies 40–64 (CPFHHEKTPSFTVSQKKQFYHCFGC). The 83-residue stretch at 259-341 (EMLLVVEGYM…GRQLKFVFLP (83 aa)) folds into the Toprim domain. Glu-265, Asp-309, and Asp-311 together coordinate Mg(2+).

The protein belongs to the DnaG primase family. In terms of assembly, monomer. Interacts with DnaB. Zn(2+) serves as cofactor. Mg(2+) is required as a cofactor.

It catalyses the reaction ssDNA + n NTP = ssDNA/pppN(pN)n-1 hybrid + (n-1) diphosphate.. RNA polymerase that catalyzes the synthesis of short RNA molecules used as primers for DNA polymerase during DNA replication. The sequence is that of DNA primase from Pasteurella multocida (strain Pm70).